Consider the following 215-residue polypeptide: uncharacterized protein (215 aa).

This is an uncharacterized protein from Ostreid herpesvirus 1 (isolate France) (OsHV-1).